A 260-amino-acid chain; its full sequence is Snake venom serine protease homolog (260 aa).

Positions 1–18 (MVLVRVLANLLMLQLSYA) are cleaved as a signal peptide. Positions 19–24 (QKSSEL) are excised as a propeptide. The 227-residue stretch at 25–251 (IIGGDECNIN…HLDWIKSIIA (227 aa)) folds into the Peptidase S1 domain. Disulfide bonds link cysteine 31/cysteine 165, cysteine 52/cysteine 68, cysteine 100/cysteine 258, cysteine 144/cysteine 212, cysteine 176/cysteine 191, and cysteine 202/cysteine 227. Aspartate 112 serves as the catalytic Charge relay system. N-linked (GlcNAc...) asparagine glycosylation is found at asparagine 123 and asparagine 124. Serine 206 acts as the Charge relay system in catalysis.

Belongs to the peptidase S1 family. Snake venom subfamily. In terms of tissue distribution, expressed by the venom gland.

Its subcellular location is the secreted. In terms of biological role, snake venom serine protease homolog. May act in the hemostasis system of the prey. The chain is Snake venom serine protease homolog from Protobothrops jerdonii (Jerdon's pitviper).